The sequence spans 138 residues: Large ribosomal subunit protein uL16 (138 aa).

Residues 1–13 (MLQPARRKYRKEQ) are compositionally biased toward basic residues. Positions 1–22 (MLQPARRKYRKEQKGRNTGVAT) are disordered.

Belongs to the universal ribosomal protein uL16 family. Part of the 50S ribosomal subunit.

Its function is as follows. Binds 23S rRNA and is also seen to make contacts with the A and possibly P site tRNAs. The sequence is that of Large ribosomal subunit protein uL16 from Paracidovorax citrulli (strain AAC00-1) (Acidovorax citrulli).